Reading from the N-terminus, the 260-residue chain is 14-3-3-like protein C (260 aa).

The protein belongs to the 14-3-3 family.

The protein is 14-3-3-like protein C of Nicotiana tabacum (Common tobacco).